Reading from the N-terminus, the 341-residue chain is 4-amino-5-hydroxymethyl-2-methylpyrimidine phosphate synthase (341 aa).

Position 62 is an N6-(pyridoxal phosphate)lysine (K62). The active site involves H66. 115-118 serves as a coordination point for pyridoxal 5'-phosphate; sequence GEFG. The CCCFC; essential for catalytic activity, may be the site of iron coordination signature appears at 195–199; it reads CCCFC.

This sequence belongs to the NMT1/THI5 family. In terms of assembly, homodimer. The cofactor is Fe cation.

It catalyses the reaction N(6)-(pyridoxal phosphate)-L-lysyl-[4-amino-5-hydroxymethyl-2-methylpyrimidine phosphate synthase] + L-histidyl-[4-amino-5-hydroxymethyl-2-methylpyrimidine phosphate synthase] + 2 Fe(3+) + 4 H2O = L-lysyl-[4-amino-5-hydroxymethyl-2-methylpyrimidine phosphate synthase] + (2S)-2-amino-5-hydroxy-4-oxopentanoyl-[4-amino-5-hydroxymethyl-2-methylpyrimidine phosphate synthase] + 4-amino-2-methyl-5-(phosphooxymethyl)pyrimidine + 3-oxopropanoate + 2 Fe(2+) + 2 H(+). Its pathway is cofactor biosynthesis; thiamine diphosphate biosynthesis. Responsible for the formation of the pyrimidine heterocycle in the thiamine biosynthesis pathway. Catalyzes the formation of hydroxymethylpyrimidine phosphate (HMP-P) from histidine and pyridoxal phosphate (PLP). The protein uses PLP and the active site histidine to form HMP-P, generating an inactive enzyme. The enzyme can only undergo a single turnover, which suggests it is a suicide enzyme. This Uromyces fabae (Rust fungus) protein is 4-amino-5-hydroxymethyl-2-methylpyrimidine phosphate synthase.